Here is a 142-residue protein sequence, read N- to C-terminus: MFLGRFTHAIDDKGRLAIPARFREAFRGQGVLTRGIDRCLTLYPMDSWQPLAEKVSSLSISDPDARAFRRMVFAEATVVEFDRQGRILLPPELRAYAGLEREAIVVGVHSYVEIWSPENWAAQAELLAAEGPSIAQRLATLI.

2 SpoVT-AbrB domains span residues Arg5–Ser47 and Ala76–Asn119.

This sequence belongs to the MraZ family. In terms of assembly, forms oligomers.

Its subcellular location is the cytoplasm. It localises to the nucleoid. This Thermomicrobium roseum (strain ATCC 27502 / DSM 5159 / P-2) protein is Transcriptional regulator MraZ.